Here is a 1118-residue protein sequence, read N- to C-terminus: Protein argonaute 1B (1118 aa).

Disordered stretches follow at residues 1-175 (MALQ…SRTV) and 188-246 (APMV…RFPL). Positions 10-24 (PHHHQVPIMVKKKRT) are enriched in basic residues. The span at 25-35 (GSGSTGESSGE) shows a compositional bias: low complexity. 3 stretches are compositionally biased toward gly residues: residues 54-92 (QHGGGRGWVPQHGGRGGGQYQGRGGHYQGRGGQGSHHPG), 100-110 (GRGGPGSHHPG), and 118-128 (GRGGSGSHHPG). 2 stretches are compositionally biased toward low complexity: residues 148-157 (RGGMPQPYYG) and 193-219 (PTPSGAGSSSQPAAEVSSGQVQQQFQQ). Residues 220–241 (LATRDQSSTSQAIQIAPPSSKS) are compositionally biased toward polar residues. The region spanning 457–570 (PVIDFVAQLL…LPMEVCKIVE (114 aa)) is the PAZ domain. In terms of domain architecture, Piwi spans 746 to 1067 (LLIVILPDNN…AAFRARFYME (322 aa)).

The protein belongs to the argonaute family. Ago subfamily.

Probably involved in the RNA silencing pathway. May bind to short RNAs such as microRNAs (miRNAs) or short interfering RNAs (siRNAs), and represses the translation of mRNAs which are complementary to them. The chain is Protein argonaute 1B (AGO1B) from Oryza sativa subsp. japonica (Rice).